Reading from the N-terminus, the 503-residue chain is UDP-N-acetylglucosamine--peptide N-acetylglucosaminyltransferase GtfA subunit (503 aa).

Residues 1–78 (MTIYNINLGI…FTDIKIAPTS (78 aa)) form an N-terminus R-fold-1 region. Residue 16–19 (GVEY) coordinates UDP. The interval 79-195 (VTVDDVLAYF…VYHFKDKIFY (117 aa)) is extended beta-sheet domain. Residues 196–306 (GKQAFVRAFM…QPKIVTIPVG (111 aa)) form a C-terminus R-fold-1 region. N-acetyl-D-glucosamine is bound at residue histidine 242. Positions 307 to 503 (SIDSLTDSSQ…KKTVEEVLHD (197 aa)) are R-fold-2. UDP is bound at residue arginine 328. An N-acetyl-D-glucosamine-binding site is contributed by glutamate 332. UDP is bound by residues lysine 333, glycine 358, and 384-385 (HA). 404 to 407 (EGFG) contacts N-acetyl-D-glucosamine. 408-412 (LTLME) provides a ligand contact to UDP.

This sequence belongs to the glycosyltransferase group 1 family. Glycosyltransferase 4 subfamily. In terms of assembly, monomer. Interacts with stabilizing protein GtfB, probably as a heterotetramer with 2 subunits each of GtfA and GtfB, part of the accessory SecA2/SecY2 protein translocation apparatus.

It localises to the cytoplasm. The protein localises to the cell membrane. It catalyses the reaction L-seryl-[protein] + UDP-N-acetyl-alpha-D-glucosamine = 3-O-[N-acetyl-alpha-D-glucosaminyl]-L-seryl-[protein] + UDP + H(+). Its pathway is protein modification; protein glycosylation. Functionally, required for the polymorphic O-glycosylation of serine-rich repeat protein PsrP. Catalyzes the first step in glycosylation by transferring N-acetylglucosamine from UDP-GlcNAc to serine residues in PsrP. Part of the accessory SecA2/SecY2 system specifically required to export serine-rich repeat cell wall proteins encoded upstream in the same operon. The GtfA-GtfB complex adds GlcNAc from UDP-GlcNAc to PsrP (experimentally characterized with truncated PsrP-SSR1 constructs); this subunit alone has weak N-acetylglucosaminyl transferase activity that is 10-fold stimulated by GtfB. The complex requires at least a 25 residue-long peptide for activity; the in vitro assay has only been seen to glycosylate Ser residues. The alpha linkage was shown in L.reuteri. The protein is UDP-N-acetylglucosamine--peptide N-acetylglucosaminyltransferase GtfA subunit of Streptococcus pneumoniae serotype 4 (strain ATCC BAA-334 / TIGR4).